We begin with the raw amino-acid sequence, 147 residues long: Myoglobin (147 aa).

One can recognise a Globin domain in the interval 2-141; that stretch reads HDAELVLKCW…VIGDIDTYYK (140 aa). H60 serves as a coordination point for nitrite. Position 60 (H60) interacts with O2. Position 89 (H89) interacts with heme b.

Belongs to the globin family. Monomeric.

The protein localises to the cytoplasm. It localises to the sarcoplasm. It carries out the reaction Fe(III)-heme b-[protein] + nitric oxide + H2O = Fe(II)-heme b-[protein] + nitrite + 2 H(+). The enzyme catalyses H2O2 + AH2 = A + 2 H2O. Monomeric heme protein which primary function is to store oxygen and facilitate its diffusion within muscle tissues. Reversibly binds oxygen through a pentacoordinated heme iron and enables its timely and efficient release as needed during periods of heightened demand. Depending on the oxidative conditions of tissues and cells, and in addition to its ability to bind oxygen, it also has a nitrite reductase activity whereby it regulates the production of bioactive nitric oxide. Under stress conditions, like hypoxia and anoxia, it also protects cells against reactive oxygen species thanks to its pseudoperoxidase activity. The sequence is that of Myoglobin (mb) from Cyprinus carpio (Common carp).